A 127-amino-acid polypeptide reads, in one-letter code: Major sperm protein 33 (127 aa).

At Ala-2 the chain carries N-acetylalanine. Residues 9 to 126 (DIQTQPGTKI…RRKNLPIEYN (118 aa)) enclose the MSP domain.

Sperm.

It localises to the cell projection. The protein localises to the pseudopodium. Its subcellular location is the cytoplasm. The protein resides in the cytoskeleton. In terms of biological role, central component in molecular interactions underlying sperm crawling. Forms an extensive filament system that extends from sperm villipoda, along the leading edge of the pseudopod. This is Major sperm protein 33 (msp-33) from Caenorhabditis elegans.